The chain runs to 337 residues: Vacuolar protein sorting-associated protein 26B-A (337 aa).

The segment at 313–337 (RFEGTSHPETRPQHSGAAAVEQEHE) is disordered.

This sequence belongs to the VPS26 family. In terms of assembly, component of the heterotrimeric retromer cargo-selective complex (CSC) which is believed to associate with variable sorting nexins to form functionally distinct retromer complex variants.

The protein localises to the cytoplasm. It is found in the endosome membrane. Its subcellular location is the early endosome. Acts as a component of the retromer cargo-selective complex (CSC). The CSC is believed to be the core functional component of retromer or respective retromer complex variants acting to prevent missorting of selected transmembrane cargo proteins into the lysosomal degradation pathway. Retromer mediates retrograde transport of cargo proteins from endosomes to the trans-Golgi network (TGN). This Xenopus laevis (African clawed frog) protein is Vacuolar protein sorting-associated protein 26B-A (vps26b-a).